The chain runs to 146 residues: Large ribosomal subunit protein uL15 (146 aa).

Residues 1–13 are compositionally biased toward basic and acidic residues; sequence MKLHELQPAEGSR. Residues 1–58 are disordered; it reads MKLHELQPAEGSRKVRNRVGRGIGSGNGKTAGKGHKGQKARSGGGVRPGFEGGQNPLY. Composition is skewed to gly residues over residues 21-31 and 42-52; these read RGIGSGNGKTA and SGGGVRPGFEG.

This sequence belongs to the universal ribosomal protein uL15 family. Part of the 50S ribosomal subunit.

Its function is as follows. Binds to the 23S rRNA. This Shouchella clausii (strain KSM-K16) (Alkalihalobacillus clausii) protein is Large ribosomal subunit protein uL15.